The following is a 636-amino-acid chain: tRNA uridine 5-carboxymethylaminomethyl modification enzyme MnmG (636 aa).

Residue Gly-18–Gly-23 participates in FAD binding. Gly-281 to Phe-295 lines the NAD(+) pocket.

The protein belongs to the MnmG family. Homodimer. Heterotetramer of two MnmE and two MnmG subunits. FAD is required as a cofactor.

The protein localises to the cytoplasm. NAD-binding protein involved in the addition of a carboxymethylaminomethyl (cmnm) group at the wobble position (U34) of certain tRNAs, forming tRNA-cmnm(5)s(2)U34. The sequence is that of tRNA uridine 5-carboxymethylaminomethyl modification enzyme MnmG from Lactiplantibacillus plantarum (strain ATCC BAA-793 / NCIMB 8826 / WCFS1) (Lactobacillus plantarum).